The chain runs to 147 residues: Response regulator Rcp1 (147 aa).

Positions Val-10 to Glu-135 constitute a Response regulatory domain. Asp-68 carries the post-translational modification 4-aspartylphosphate.

Phosphorylated by Cph1.

Forms a two-component system with Cph1 in which it acts as receiver substrate. This Synechocystis sp. (strain ATCC 27184 / PCC 6803 / Kazusa) protein is Response regulator Rcp1 (rcp1).